The primary structure comprises 480 residues: Proline--tRNA ligase (480 aa).

The protein belongs to the class-II aminoacyl-tRNA synthetase family. ProS type 3 subfamily. Homodimer.

It localises to the cytoplasm. The catalysed reaction is tRNA(Pro) + L-proline + ATP = L-prolyl-tRNA(Pro) + AMP + diphosphate. Its function is as follows. Catalyzes the attachment of proline to tRNA(Pro) in a two-step reaction: proline is first activated by ATP to form Pro-AMP and then transferred to the acceptor end of tRNA(Pro). This chain is Proline--tRNA ligase, found in Roseiflexus sp. (strain RS-1).